A 184-amino-acid polypeptide reads, in one-letter code: Dual specificity protein phosphatase 22 (184 aa).

Glycine 2 is lipidated: N-myristoyl glycine. One can recognise a Tyrosine-protein phosphatase domain in the interval 4–144 (GMSQILPGLY…LQEFEKHEVH (141 aa)). The active-site Phosphocysteine intermediate is cysteine 88. A protein contacts are provided by leucine 89, alanine 90, valine 92, serine 93, and arginine 94.

This sequence belongs to the protein-tyrosine phosphatase family. Non-receptor class dual specificity subfamily. In terms of assembly, monomer. Interacts with LCK; the interaction is direct. Interacts with UBR2; the interaction is direct. Myristoylation regulates subcellular location, and is necessary for activation of JNK.

The protein resides in the cytoplasm. The enzyme catalyses O-phospho-L-tyrosyl-[protein] + H2O = L-tyrosyl-[protein] + phosphate. It catalyses the reaction O-phospho-L-seryl-[protein] + H2O = L-seryl-[protein] + phosphate. The catalysed reaction is O-phospho-L-threonyl-[protein] + H2O = L-threonyl-[protein] + phosphate. Functionally, dual specificity phosphatase; can dephosphorylate both phosphotyrosine and phosphoserine or phosphothreonine residues. Activates the JNK signaling pathway. Inhibits T-cell receptor signaling and T-cell mediated immune responses, acting, at least in part, by inducing degradation of E3 ubiquitin ligase UBR2. Dephosphorylates and thereby induces 'Lys-48'-linked ubiquitination of UBR2, leading to proteasomal degradation of UBR2. Dephosphorylates and thereby inactivates tyrosine kinase LCK. Inhibits UBR2-mediated 'Lys-63'-linked ubiquitination of LCK. May play a role in B-cell receptor (BCR) signaling and B-cell function. This chain is Dual specificity protein phosphatase 22 (Dusp22), found in Mus musculus (Mouse).